A 156-amino-acid polypeptide reads, in one-letter code: Small ribosomal subunit protein uS7 (156 aa).

This sequence belongs to the universal ribosomal protein uS7 family. Part of the 30S ribosomal subunit. Contacts proteins S9 and S11.

Its function is as follows. One of the primary rRNA binding proteins, it binds directly to 16S rRNA where it nucleates assembly of the head domain of the 30S subunit. Is located at the subunit interface close to the decoding center, probably blocks exit of the E-site tRNA. This is Small ribosomal subunit protein uS7 from Ralstonia nicotianae (strain ATCC BAA-1114 / GMI1000) (Ralstonia solanacearum).